Reading from the N-terminus, the 204-residue chain is Recombination protein RecR (204 aa).

Residues 58 to 75 (CSICQNVTDRDADPCRIC) form a C4-type zinc finger. One can recognise a Toprim domain in the interval 83 to 181 (SVICVVESPV…MVTKIARGIP (99 aa)).

It belongs to the RecR family.

May play a role in DNA repair. It seems to be involved in an RecBC-independent recombinational process of DNA repair. It may act with RecF and RecO. The sequence is that of Recombination protein RecR from Chlorobium phaeovibrioides (strain DSM 265 / 1930) (Prosthecochloris vibrioformis (strain DSM 265)).